A 287-amino-acid chain; its full sequence is Heavy metal-associated isoprenylated plant protein 4 (287 aa).

HMA domains are found at residues 14–80 (IITA…VELI) and 112–176 (IRTT…KHAE). A metal cation contacts are provided by Cys-25, Cys-28, Cys-123, and Cys-126. Residues 179-235 (SSKTEEEKKKEEEDKKKKEEEDKKKKEDEKKKEEEKKKEEENKKKEGEKKKEEVKVE) are a coiled coil. Residues 181–232 (KTEEEKKKEEEDKKKKEEEDKKKKEDEKKKEEEKKKEEENKKKEGEKKKEEV) are disordered. Cys-284 carries the post-translational modification Cysteine methyl ester. Residue Cys-284 is the site of S-farnesyl cysteine attachment. Residues 285–287 (RIV) constitute a propeptide, removed in mature form.

It belongs to the HIPP family.

In terms of biological role, heavy-metal-binding protein. This chain is Heavy metal-associated isoprenylated plant protein 4, found in Arabidopsis thaliana (Mouse-ear cress).